The sequence spans 421 residues: Gamma-glutamyl phosphate reductase (421 aa).

The protein belongs to the gamma-glutamyl phosphate reductase family.

It localises to the cytoplasm. It catalyses the reaction L-glutamate 5-semialdehyde + phosphate + NADP(+) = L-glutamyl 5-phosphate + NADPH + H(+). Its pathway is amino-acid biosynthesis; L-proline biosynthesis; L-glutamate 5-semialdehyde from L-glutamate: step 2/2. Catalyzes the NADPH-dependent reduction of L-glutamate 5-phosphate into L-glutamate 5-semialdehyde and phosphate. The product spontaneously undergoes cyclization to form 1-pyrroline-5-carboxylate. The polypeptide is Gamma-glutamyl phosphate reductase (Shewanella pealeana (strain ATCC 700345 / ANG-SQ1)).